The following is a 617-amino-acid chain: Isopropyl malate synthase gloH (617 aa).

The Pyruvate carboxyltransferase domain occupies 47–325 (PIWLSTDLRD…ETGLDFSDLL (279 aa)).

It belongs to the alpha-IPM synthase/homocitrate synthase family. LeuA type 2 subfamily.

It catalyses the reaction 3-methyl-2-oxobutanoate + acetyl-CoA + H2O = (2S)-2-isopropylmalate + CoA + H(+). It participates in mycotoxin biosynthesis. In terms of biological role, 2-isopropylmalate synthase; part of the gene cluster that mediates the biosynthesis of pneumocandins, lipohexapeptides of the echinocandin family that prevent fungal cell wall formation by non-competitive inhibition of beta-1,3-glucan synthase. The 10,12-dimethylmyristoyl side chain is synthesized by the reducing polyketide synthase gloL/GLPKS4. The thioesterase gloN/GLHYD exclusively interacts with gloL/GLPKS4 to maintain turnover of the polyketide side chain. The 10R,12S-dimethylmyristic acid is then transferred to the first thiolation domain of the nonribosomal peptide synthetase gloA/GLNRPS4 by the acyl-AMP ligase gloD/GLligase, followed by its acylation to L-ornithine to trigger elongation of the cyclic hexapeptide. L-ornithine, 4R-hydroxyl-L-proline (generated from L-proline by the dioxygenase gloF/GLOXY2), 3S-hydroxyl-L-homotyrosine (generated by gloG/GLHtyB, gloH/GLHtyA, gloI/GLHtyC, gloJ/GLHtyD and hydroxylated at C-3 by the dioxygenase gloM/GLOXY1), 3R-hydroxyl-L-glutamine (generated from L-glutamine probably by the dioxygenase gloE/GLOXY3) and 3S-hydroxyl-L-proline (generated from L-proline by the dioxygenase gloF/GLOXY2 to yield pneumocandin B0), or 3S-hydroxyl-4S-methyl-L-proline (generated from L-leucine by the dioxygenase gloC/GLOXY4 to yield pneumocandin A0) are sequentially added to the growing chain. The last C domain of gloA/GLNRPS4 is proposed to be responsible for cyclization by condensation to form the peptide bond between L-ornithine and 3S-hydroxyl-4S-methyl-L-proline (for pneumocandin A0) or 3S-hydroxyl-L-proline (for pneumocandin B0). Finally, the subsequent C-4 hydroxylation of 3S-hydroxyl-L-homotyrosine and L-ornithine dihydroxylation at C-4 and C-5 are performed by the cytochrome P450 monooxygenases gloP/GLP450-1 and gloO/GLP450-2, respectively. This Glarea lozoyensis (strain ATCC 20868 / MF5171) protein is Isopropyl malate synthase gloH.